The sequence spans 82 residues: Penaeidin-3i (82 aa).

The N-terminal stretch at Met1–Gly19 is a signal peptide. Gln20 is modified (pyrrolidone carboxylic acid). Cystine bridges form between Cys55-Cys73 and Cys67-Cys74. Ser81 is subject to Serine amide.

This sequence belongs to the penaeidin family.

It is found in the cytoplasmic granule. Functionally, antibacterial and antifungal activity. Presents chitin-binding activity. This chain is Penaeidin-3i, found in Penaeus vannamei (Whiteleg shrimp).